A 300-amino-acid chain; its full sequence is Transcription factor DUO1 (300 aa).

HTH myb-type domains follow at residues 8–64 (KEEI…RPNL) and 65–116 (KNGC…KRLA). 2 DNA-binding regions (H-T-H motif) span residues 36 to 60 (WSSI…VNKL) and 89 to 112 (WARI…SSRQ). Residues 123-135 (SDASSSSFNPKSS) are compositionally biased toward low complexity. The segment at 123 to 145 (SDASSSSFNPKSSSSHRLKGKNV) is disordered. Over residues 136 to 145 (SSHRLKGKNV) the composition is skewed to basic residues.

In terms of tissue distribution, confined to inflorescences, especially in stamens and pollen.

It is found in the nucleus. Functionally, transcription activator that acts as a positive regulator of male germline development by promoting both gametic cell specification and cell cycle progression. Binds to canonical MYB sites 5'-AACCGTC-3', 5'-AAACCGC-3' and 5'-AACCGT-3' in promoters to trigger the expression of male germline-specific or enriched genes (e.g. MGH3, GEX2 and GCS1), including those required for fertilization. Required for sperm cell specification leading to pollen maturation by activating a germline-specific regulon. Involved in pollen mitosis entry at G2-M transition via the regulation of CYCB1-1, DAZ1 and DAZ2 expression. This is Transcription factor DUO1 from Arabidopsis thaliana (Mouse-ear cress).